A 152-amino-acid chain; its full sequence is UPF0266 membrane protein YobD (152 aa).

3 consecutive transmembrane segments (helical) span residues 6–26 (LVLI…QFIM), 45–65 (IDSV…VTNH), and 67–87 (ALIT…IFWI).

This sequence belongs to the UPF0266 family.

The protein resides in the cell inner membrane. The polypeptide is UPF0266 membrane protein YobD (Escherichia coli O157:H7 (strain EC4115 / EHEC)).